Here is a 234-residue protein sequence, read N- to C-terminus: Transmembrane protein 65 (234 aa).

Residues 1–55 (MSRLLPLLGSRTARSLRPGPAAAPRLPSWCCCGRGLLALGVPGGPRLLGTHPKKE) constitute a mitochondrion transit peptide. Over 56–110 (PMEALNTAQGARDFIYSLHSTERSCLLKELHRFESIAIAQEKLEALPPTPGQLRY) the chain is Cytoplasmic. A helical membrane pass occupies residues 111–131 (VFFHNAIPFVGFGFLDNAIMI). At 132–138 (VAGTQIE) the chain is on the extracellular side. A helical transmembrane segment spans residues 139-159 (LSIGIILGISTMAAAALGNLV). The Cytoplasmic segment spans residues 160–203 (SDLAGLGLAGYVEALASRLGLSIPDLTPKQVDMWQTRVSTHLGK). Residues 204–224 (AVGVTIGCILGMFPLIFFGGS) form a helical membrane-spanning segment. At 225 to 234 (EEDEKLETTN) the chain is on the extracellular side.

As to quaternary structure, monomer. Homodimer. Interacts with GJA1. Interacts weakly with DSP. Interacts with SCN1B. In terms of tissue distribution, predominantly expressed in the ventricular tissue (at protein level).

The protein localises to the cell membrane. Its subcellular location is the mitochondrion inner membrane. In terms of biological role, essential for maintaining proper cardiac intercalated disk (ICD) structure and function as well as cardiac conduction velocity in the heart. Its association with SCN1B is required for stabilizing the perinexus in the ICD and for localization of GJA1 and SCN5A to the ICD. May regulate the function of the gap junction protein GJA1 and may contribute to the stability and proper localization of GJA1 to cardiac intercalated disk thereby regulating gap junction communication. Regulates mitochondrial respiration and mitochondrial DNA copy number maintenance. The protein is Transmembrane protein 65 (Tmem65) of Mus musculus (Mouse).